A 407-amino-acid polypeptide reads, in one-letter code: Imidazolonepropionase (407 aa).

Fe(3+) contacts are provided by His-68 and His-70. Residues His-68 and His-70 each coordinate Zn(2+). Positions 77, 140, and 173 each coordinate 4-imidazolone-5-propanoate. Tyr-140 lines the N-formimidoyl-L-glutamate pocket. Position 238 (His-238) interacts with Fe(3+). His-238 is a binding site for Zn(2+). Residue Gln-241 coordinates 4-imidazolone-5-propanoate. Residue Asp-313 participates in Fe(3+) binding. Asp-313 is a Zn(2+) binding site. 2 residues coordinate N-formimidoyl-L-glutamate: Asn-315 and Gly-317. Thr-318 is a 4-imidazolone-5-propanoate binding site.

This sequence belongs to the metallo-dependent hydrolases superfamily. HutI family. Zn(2+) serves as cofactor. Requires Fe(3+) as cofactor.

It is found in the cytoplasm. The catalysed reaction is 4-imidazolone-5-propanoate + H2O = N-formimidoyl-L-glutamate. Its pathway is amino-acid degradation; L-histidine degradation into L-glutamate; N-formimidoyl-L-glutamate from L-histidine: step 3/3. Catalyzes the hydrolytic cleavage of the carbon-nitrogen bond in imidazolone-5-propanoate to yield N-formimidoyl-L-glutamate. It is the third step in the universal histidine degradation pathway. In Burkholderia ambifaria (strain ATCC BAA-244 / DSM 16087 / CCUG 44356 / LMG 19182 / AMMD) (Burkholderia cepacia (strain AMMD)), this protein is Imidazolonepropionase.